A 363-amino-acid chain; its full sequence is Pyrimidine monooxygenase RutA (363 aa).

Residues 49 to 50 (IK), N115, E124, 140 to 141 (RY), and S190 contribute to the FMN site.

It belongs to the NtaA/SnaA/DszA monooxygenase family. RutA subfamily.

The catalysed reaction is uracil + FMNH2 + NADH + O2 = (Z)-3-ureidoacrylate + FMN + NAD(+) + H2O + H(+). It catalyses the reaction thymine + FMNH2 + NADH + O2 = (Z)-2-methylureidoacrylate + FMN + NAD(+) + H2O + H(+). Its function is as follows. Catalyzes the pyrimidine ring opening between N-3 and C-4 by an unusual flavin hydroperoxide-catalyzed mechanism, adding oxygen atoms in the process to yield ureidoacrylate peracid, that immediately reacts with FMN forming ureidoacrylate and FMN-N(5)-oxide. The FMN-N(5)-oxide reacts spontaneously with NADH to produce FMN. Requires the flavin reductase RutF to regenerate FMN in vivo. The chain is Pyrimidine monooxygenase RutA from Enterobacter cloacae subsp. cloacae (strain ATCC 13047 / DSM 30054 / NBRC 13535 / NCTC 10005 / WDCM 00083 / NCDC 279-56).